A 227-amino-acid polypeptide reads, in one-letter code: Small ribosomal subunit protein uS3 (227 aa).

The KH type-2 domain occupies 39–107 (VREFLMKKLE…PVHINIEEIR (69 aa)).

It belongs to the universal ribosomal protein uS3 family. In terms of assembly, part of the 30S ribosomal subunit. Forms a tight complex with proteins S10 and S14.

In terms of biological role, binds the lower part of the 30S subunit head. Binds mRNA in the 70S ribosome, positioning it for translation. In Hahella chejuensis (strain KCTC 2396), this protein is Small ribosomal subunit protein uS3.